A 129-amino-acid chain; its full sequence is Small ribosomal subunit protein uS11 (129 aa).

The protein belongs to the universal ribosomal protein uS11 family. As to quaternary structure, part of the 30S ribosomal subunit. Interacts with proteins S7 and S18. Binds to IF-3.

Located on the platform of the 30S subunit, it bridges several disparate RNA helices of the 16S rRNA. Forms part of the Shine-Dalgarno cleft in the 70S ribosome. The polypeptide is Small ribosomal subunit protein uS11 (Pelotomaculum thermopropionicum (strain DSM 13744 / JCM 10971 / SI)).